A 611-amino-acid chain; its full sequence is Elongation factor 4 (611 aa).

Residues 12–193 form the tr-type G domain; sequence AVIRNFCIIA…TIVAKVPAPE (182 aa). Residues 24–29 and 140–143 each bind GTP; these read DHGKST and NKID.

This sequence belongs to the TRAFAC class translation factor GTPase superfamily. Classic translation factor GTPase family. LepA subfamily.

The protein resides in the cell membrane. The enzyme catalyses GTP + H2O = GDP + phosphate + H(+). In terms of biological role, required for accurate and efficient protein synthesis under certain stress conditions. May act as a fidelity factor of the translation reaction, by catalyzing a one-codon backward translocation of tRNAs on improperly translocated ribosomes. Back-translocation proceeds from a post-translocation (POST) complex to a pre-translocation (PRE) complex, thus giving elongation factor G a second chance to translocate the tRNAs correctly. Binds to ribosomes in a GTP-dependent manner. In Cutibacterium acnes (strain DSM 16379 / KPA171202) (Propionibacterium acnes), this protein is Elongation factor 4.